Consider the following 919-residue polypeptide: Glutamate receptor ionotropic, kainate 3 (919 aa).

A signal peptide spans 1 to 31 (MTAPWRRLRSLVWEYWAGFLVCAFWIPDSRG). The Extracellular segment spans residues 32–563 (MPHVIRIGGI…VFSFLNPLSP (532 aa)). 7 N-linked (GlcNAc...) asparagine glycosylation sites follow: Asn-70, Asn-76, Asn-278, Asn-381, Asn-415, Asn-426, and Asn-433. Cys-99 and Cys-350 are joined by a disulfide. Residues Pro-518, Thr-520, and Arg-525 each contribute to the L-glutamate site. Residues Asn-548 and Asn-551 are each glycosylated (N-linked (GlcNAc...) asparagine). A helical membrane pass occupies residues 564–584 (DIWMYVLLAYLGVSCVLFVIA). Residues 585-636 (RFSPYEWYDAHPCNPGSEVVENNFTLLNSFWFGMGSLMQQGSELMPKALSTR) lie on the Cytoplasmic side of the membrane. A helical transmembrane segment spans residues 637–657 (IIGGIWWFFTLIIISSYTANL). The Extracellular segment spans residues 658–820 (AAFLTVERME…KEASALGIQK (163 aa)). Ala-691, Thr-692, and Glu-739 together coordinate L-glutamate. An N-linked (GlcNAc...) asparagine glycan is attached at Asn-752. The chain crosses the membrane as a helical span at residues 821 to 841 (IGGIFIVLAAGLVLSVLVAVG). Over 842–919 (EFIYKLRKTA…CSTSLAPVFP (78 aa)) the chain is Cytoplasmic. Ser-869 carries the post-translational modification Phosphoserine. A Glycyl lysine isopeptide (Lys-Gly) (interchain with G-Cter in SUMO1) cross-link involves residue Lys-887.

It belongs to the glutamate-gated ion channel (TC 1.A.10.1) family. GRIK3 subfamily. As to quaternary structure, homotetramer, and heterotetramer with GRIK4 or GRIK5. Can form functional heteromeric receptors with GRIK2. Interacts with PRKCABP. Interacts with NETO2. In terms of assembly, homomeric GluR7A forms functional kainate receptors which have very low sensitivity to glutamate. Can form functional heteromeric receptors with GRIK4 and GRIK5. Homomeric GluR7B forms functional kainate receptors. Mass spectrometry data suggest the protein is N-glycosylated at five distinct sites. In terms of tissue distribution, expressed in the olfactory bulb (at protein level). Expressed in the deep cortical layers, dentate gyrus, reticular thalamic nucleus, mammillary bodies, pons, and cerebellum of the adult.

Its subcellular location is the cell membrane. The protein resides in the postsynaptic cell membrane. The catalysed reaction is Ca(2+)(in) = Ca(2+)(out). In terms of biological role, ionotropic glutamate receptor that functions as a cation-permeable ligand-gated ion channel, gated by L-glutamate and the glutamatergic agonist kainic acid. Binding of the excitatory neurotransmitter L-glutamate induces a conformation change, leading to the opening of the cation channel, and thereby converts the chemical signal to an electrical impulse. The receptor then desensitizes rapidly and enters a transient inactive state, characterized by the presence of bound agonist. In association with GRIK2, involved in presynaptic facilitation of glutamate release at hippocampal mossy fiber synapses. Ionotropic glutamate receptor that functions as a ligand-gated cation channel, gated by L-glutamate and the glutamatergic agonist kainic acid. This chain is Glutamate receptor ionotropic, kainate 3 (Grik3), found in Rattus norvegicus (Rat).